A 60-amino-acid polypeptide reads, in one-letter code: MSDSQHFSRYEKARIIGARALQVAYGAPVLVDTDQTEPILIAAEEYDADALPFTVRREGT.

It belongs to the archaeal Rpo6/eukaryotic RPB6 RNA polymerase subunit family. In terms of assembly, part of the RNA polymerase complex.

It is found in the cytoplasm. It catalyses the reaction RNA(n) + a ribonucleoside 5'-triphosphate = RNA(n+1) + diphosphate. DNA-dependent RNA polymerase (RNAP) catalyzes the transcription of DNA into RNA using the four ribonucleoside triphosphates as substrates. The chain is DNA-directed RNA polymerase subunit Rpo6 from Halobacterium salinarum (strain ATCC 700922 / JCM 11081 / NRC-1) (Halobacterium halobium).